The following is a 1370-amino-acid chain: Major capsid protein (1370 aa).

It belongs to the herpesviridae major capsid protein family. As to quaternary structure, homomultimer. Makes the hexons and eleven out of twelve pentons. Interacts with triplex proteins 1/TRX1 and 2/TRX2; adjacent capsomers are linked together in groups of three by triplexes, heterotrimeric complexes composed of one molecule of TRX1 and two molecules of TRX2. Interacts with scaffold protein; this interaction allows efficient MCP transport to the host nucleus. Interacts with capsid vertex component 2/CVC2. Interacts with the small capsomere-interacting protein/SCP.

Its subcellular location is the virion. It localises to the host nucleus. In terms of biological role, self-assembles to form an icosahedral capsid with a T=16 symmetry, about 200 nm in diameter, and consisting of 150 hexons and 12 pentons (total of 162 capsomers). Hexons form the edges and faces of the capsid and are each composed of six MCP molecules. In contrast, one penton is found at each of the 12 vertices. Eleven of the pentons are MCP pentamers, while the last vertex is occupied by the portal complex. The capsid is surrounded by a layer of proteinaceous material designated the tegument which, in turn, is enclosed in an envelope of host cell-derived lipids containing virus-encoded glycoproteins. The protein is Major capsid protein of Connochaetes taurinus (Blue wildebeest).